Here is a 192-residue protein sequence, read N- to C-terminus: Ion-translocating oxidoreductase complex subunit A (192 aa).

The next 6 membrane-spanning stretches (helical) occupy residues 5–25 (LLLLISTVLVNNFVLVKFLGL), 39–59 (IGMSMATTFVLTLASILSYLV), 65–85 (LPFDLSYLRTMSFILVIAVVV), 102–122 (ALGIYLPLITTNCAVLGVALL), 134–154 (AIYGFGAAVGFSLVLILFSAM), and 171–191 (AIAMITAGLMSLAFMGFTGLV).

Belongs to the NqrDE/RnfAE family. In terms of assembly, the complex is composed of six subunits: RnfA, RnfB, RnfC, RnfD, RnfE and RnfG.

It is found in the cell inner membrane. In terms of biological role, part of a membrane-bound complex that couples electron transfer with translocation of ions across the membrane. This chain is Ion-translocating oxidoreductase complex subunit A, found in Shewanella putrefaciens (strain CN-32 / ATCC BAA-453).